The chain runs to 329 residues: MPAQGPSHGELPPADAGRESSPYLELDRSAWAALASEVENPLSAEEIRRLRGLGDQLDLDEVQQIYLPVSRLLSLYVESAGRLYRAQEEFLHQDQPPRTPFVIGLAGSVAVGKSTTARVLQEMLAHWPQHPNVALVTTDGFLYPNAELERRGLLERKGFPESYDRRALLKFVVDIKSGKDEVLAPTYSHLVYDVVPDEKVVIRRPDIVIVEGLNVLQPARVRDDGRTGLTLSDFFDFSVYVDAKTSTIRDWYVSRFLRLRETAFQDTGSYFAKYATLSIEEAMAEAERIWDTINGPNLAQNVLPTRSRATLVLRKDRDHSVRYVRLRKL.

A disordered region spans residues 1 to 22 (MPAQGPSHGELPPADAGRESSP). 107–114 (GSVAVGKS) is a binding site for ATP.

Belongs to the prokaryotic pantothenate kinase family.

Its subcellular location is the cytoplasm. The catalysed reaction is (R)-pantothenate + ATP = (R)-4'-phosphopantothenate + ADP + H(+). It participates in cofactor biosynthesis; coenzyme A biosynthesis; CoA from (R)-pantothenate: step 1/5. The polypeptide is Pantothenate kinase (Nocardioides sp. (strain ATCC BAA-499 / JS614)).